A 345-amino-acid polypeptide reads, in one-letter code: Phosphoribosylformylglycinamidine cyclo-ligase (345 aa).

It belongs to the AIR synthase family. In terms of assembly, homodimer.

The protein resides in the cytoplasm. It catalyses the reaction 2-formamido-N(1)-(5-O-phospho-beta-D-ribosyl)acetamidine + ATP = 5-amino-1-(5-phospho-beta-D-ribosyl)imidazole + ADP + phosphate + H(+). It functions in the pathway purine metabolism; IMP biosynthesis via de novo pathway; 5-amino-1-(5-phospho-D-ribosyl)imidazole from N(2)-formyl-N(1)-(5-phospho-D-ribosyl)glycinamide: step 2/2. The polypeptide is Phosphoribosylformylglycinamidine cyclo-ligase (Escherichia coli O157:H7).